The chain runs to 275 residues: Phosphonoacetaldehyde hydrolase (275 aa).

The Nucleophile role is filled by D15. Positions 15 and 17 each coordinate Mg(2+). K56 functions as the Schiff-base intermediate with substrate in the catalytic mechanism. Position 189 (D189) interacts with Mg(2+).

Belongs to the HAD-like hydrolase superfamily. PhnX family. As to quaternary structure, homodimer. Mg(2+) is required as a cofactor.

The enzyme catalyses phosphonoacetaldehyde + H2O = acetaldehyde + phosphate + H(+). Functionally, involved in phosphonate degradation. This Pseudomonas putida (Arthrobacter siderocapsulatus) protein is Phosphonoacetaldehyde hydrolase.